The chain runs to 176 residues: Ribosome rescue factor SmrB (176 aa).

A Smr domain is found at 97–172 (LDMHGMTQQE…GDGALLVLLS (76 aa)).

It belongs to the SmrB family. As to quaternary structure, associates with collided ribosomes, but not with correctly translating polysomes.

Acts as a ribosome collision sensor. Detects stalled/collided disomes (pairs of ribosomes where the leading ribosome is stalled and a second ribosome has collided with it) and endonucleolytically cleaves mRNA at the 5' boundary of the stalled ribosome. Stalled/collided disomes form a new interface (primarily via the 30S subunits) that binds SmrB. Cleaved mRNA becomes available for tmRNA ligation, leading to ribosomal subunit dissociation and rescue of stalled ribosomes. In Vibrio vulnificus (strain CMCP6), this protein is Ribosome rescue factor SmrB.